The following is a 156-amino-acid chain: Small ribosomal subunit protein uS7 (156 aa).

The protein belongs to the universal ribosomal protein uS7 family. In terms of assembly, part of the 30S ribosomal subunit. Contacts proteins S9 and S11.

In terms of biological role, one of the primary rRNA binding proteins, it binds directly to 16S rRNA where it nucleates assembly of the head domain of the 30S subunit. Is located at the subunit interface close to the decoding center, probably blocks exit of the E-site tRNA. This is Small ribosomal subunit protein uS7 from Campylobacter curvus (strain 525.92).